The chain runs to 658 residues: ATP-dependent RNA helicase DDX3Y (658 aa).

The interval M1–E143 is disordered. S2 is subject to N-acetylserine. Positions R45 to A69 are enriched in basic and acidic residues. K56 bears the N6-acetyllysine mark. Phosphoserine is present on residues S86 and S90. A compositionally biased stretch (basic and acidic residues) spans G94–R129. Position 101 is an omega-N-methylarginine (R101). Residue Y104 is modified to Phosphotyrosine. The residue at position 110 (R110) is an Omega-N-methylarginine. K117 is modified (N6-acetyllysine). A phosphoserine mark is found at S130 and S182. The Q motif motif lies at E179–K207. Residue Y199 to Q206 coordinates ATP. One can recognise a Helicase ATP-binding domain in the interval I210–L402. K214 participates in a covalent cross-link: Glycyl lysine isopeptide (Lys-Gly) (interchain with G-Cter in SUMO2). Residue A223–T230 coordinates ATP. The DEAD box motif lies at D346–D349. Positions N413–A574 constitute a Helicase C-terminal domain. A Phosphoserine modification is found at S455. Position 590 is an omega-N-methylarginine (R590). S592 and S603 each carry phosphoserine. Residues A597 to N627 form a disordered region. Positions S603 to N627 are enriched in low complexity. Omega-N-methylarginine occurs at positions 615 and 628.

It belongs to the DEAD box helicase family. DDX3/DED1 subfamily. In terms of tissue distribution, found in heart, brain, liver, skeletal muscle, kidney and testis. Low expression detected in lung. In testis, expressed in all types of spermatogenic cells including spermatogonia, spermatocytes, spermatids and somatic Sertoli cells within the seminiferous tubules. Also expressed in Leydig cells and other interstitial cells.

The protein resides in the cytoplasm. It is found in the nucleus. It catalyses the reaction ATP + H2O = ADP + phosphate + H(+). Probable ATP-dependent RNA helicase. During immune response, may enhance IFNB1 expression via IRF3/IRF7 pathway. This Mus musculus (Mouse) protein is ATP-dependent RNA helicase DDX3Y (Ddx3y).